A 184-amino-acid chain; its full sequence is NADH-quinone oxidoreductase subunit B (184 aa).

Residues Cys63, Cys64, Cys128, and Cys158 each contribute to the [4Fe-4S] cluster site.

This sequence belongs to the complex I 20 kDa subunit family. As to quaternary structure, NDH-1 is composed of 14 different subunits. Subunits NuoB, C, D, E, F, and G constitute the peripheral sector of the complex. The cofactor is [4Fe-4S] cluster.

It is found in the cell inner membrane. It carries out the reaction a quinone + NADH + 5 H(+)(in) = a quinol + NAD(+) + 4 H(+)(out). In terms of biological role, NDH-1 shuttles electrons from NADH, via FMN and iron-sulfur (Fe-S) centers, to quinones in the respiratory chain. The immediate electron acceptor for the enzyme in this species is believed to be ubiquinone. Couples the redox reaction to proton translocation (for every two electrons transferred, four hydrogen ions are translocated across the cytoplasmic membrane), and thus conserves the redox energy in a proton gradient. This is NADH-quinone oxidoreductase subunit B from Xylella fastidiosa (strain M12).